Here is a 266-residue protein sequence, read N- to C-terminus: Eukaryotic translation initiation factor 3 subunit J (266 aa).

2 disordered regions span residues 1–142 (MAPS…VSDS) and 215–243 (MSNEKMREERAADKGNKKSKAAKTKVSLV). The span at 26–44 (DEEEEDVLDSWDAAEDSEV) shows a compositional bias: acidic residues. Residues 40–99 (EDSEVEREKAAKAAEAKAKAEAEAAAKKKSKAQRIQEHKEERKKREEEDSSSESEEDEAE) adopt a coiled-coil conformation. 2 stretches are compositionally biased toward basic and acidic residues: residues 45–65 (EREKAAKAAEAKAKAEAEAAA) and 73–86 (RIQEHKEERKKREE). A compositionally biased stretch (acidic residues) spans 87 to 97 (EDSSSESEEDE). 2 stretches are compositionally biased toward basic and acidic residues: residues 98 to 118 (AERRARLRRTEKDSDLKHAED) and 218 to 230 (EKMREERAADKGN).

Belongs to the eIF-3 subunit J family. As to quaternary structure, component of the eukaryotic translation initiation factor 3 (eIF-3) complex.

The protein resides in the cytoplasm. Component of the eukaryotic translation initiation factor 3 (eIF-3) complex, which is involved in protein synthesis of a specialized repertoire of mRNAs and, together with other initiation factors, stimulates binding of mRNA and methionyl-tRNAi to the 40S ribosome. The eIF-3 complex specifically targets and initiates translation of a subset of mRNAs involved in cell proliferation. This chain is Eukaryotic translation initiation factor 3 subunit J (hcr1), found in Aspergillus terreus (strain NIH 2624 / FGSC A1156).